Reading from the N-terminus, the 135-residue chain is Protein PsiE homolog (135 aa).

4 helical membrane-spanning segments follow: residues Val20–Leu40, Tyr54–Val74, His82–Val102, and Pro107–Ala127.

It belongs to the PsiE family.

Its subcellular location is the cell inner membrane. The protein is Protein PsiE homolog of Yersinia enterocolitica serotype O:8 / biotype 1B (strain NCTC 13174 / 8081).